Reading from the N-terminus, the 122-residue chain is Basic phospholipase A2 (122 aa).

Cystine bridges form between C26/C115, C28/C44, C43/C95, C49/C122, C50/C88, C57/C81, and C75/C86. Positions 27, 29, and 31 each coordinate Ca(2+). H47 is a catalytic residue. D48 is a Ca(2+) binding site. D89 is a catalytic residue.

It belongs to the phospholipase A2 family. Group II subfamily. D49 sub-subfamily. The cofactor is Ca(2+). Expressed by the venom gland.

The protein resides in the secreted. It catalyses the reaction a 1,2-diacyl-sn-glycero-3-phosphocholine + H2O = a 1-acyl-sn-glycero-3-phosphocholine + a fatty acid + H(+). In terms of biological role, snake venom phospholipase A2 (PLA2) that does not inhibit platelet aggregation. Exhibits cytotoxic and anticoagulant activity. Induces Ehrlich tumor growth but not angiogenesis. PLA2 catalyzes the calcium-dependent hydrolysis of the 2-acyl groups in 3-sn-phosphoglycerides. In Bothrops leucurus (Whitetail lancehead), this protein is Basic phospholipase A2.